The following is a 1127-amino-acid chain: Caprin-2 (1127 aa).

Residues 67–108 (YQSPSGHSEEEREGNMKSAKPQVNHSQHGESQRALSPLQSTL) are disordered. The segment covering 99–108 (RALSPLQSTL) has biased composition (polar residues). Coiled coils occupy residues 129–156 (LKHKIRNIEKKKLKLEDYKDRLKSGEHL) and 194–216 (AQKKAQRREHMLKLEAEKKKLRT). Disordered regions lie at residues 382–614 (NKQG…KDPV), 642–753 (DKPS…SSSV), and 922–975 (QCYK…PVDV). Composition is skewed to basic and acidic residues over residues 402–432 (KRWDMLTEPDGQEKKQESFKSWEASGKHQEV) and 440–464 (EQRKQDTSKLRSTLPEEQKKQEISK). Polar residues-rich tracts occupy residues 512 to 531 (PKSWTPSMQSEQNTTKSWTT) and 544 to 567 (TPKSWENNVESQKHSLTSQSQISP). Over residues 588–597 (LNTEPKDVPK) the composition is skewed to basic and acidic residues. Polar residues-rich tracts occupy residues 665–714 (KEQN…TSET) and 741–753 (QGFQSPPASSSSV). 2 positions are modified to phosphoserine: S948 and S949. The segment covering 956–970 (TFNSGDSGQGDSRSM) has biased composition (polar residues). The C1q domain maps to 993–1127 (PQQMRVAFSA…TFSGYLLYQD (135 aa)). Residues D1078 and E1084 each contribute to the Ca(2+) site.

The protein belongs to the caprin family. Homotrimer; via C1q domain. Found in a complex with LRP6, CCNY and CDK14 during G2/M stage; CAPRIN2 functions as a scaffold for the complex by binding to CCNY via its N terminus and to CDK14 via its C terminus. Interacts with LRP5. Interacts with LRP6. Detected in all tissues tested with highest levels of expression in brain and spleen.

It is found in the cytoplasm. Its subcellular location is the mitochondrion. The protein resides in the cell membrane. Promotes phosphorylation of the Wnt coreceptor LRP6, leading to increased activity of the canonical Wnt signaling pathway. Facilitates constitutive LRP6 phosphorylation by CDK14/CCNY during G2/M stage of the cell cycle, which may potentiate cells for Wnt signaling. May regulate the transport and translation of mRNAs, modulating for instance the expression of proteins involved in synaptic plasticity in neurons. Involved in regulation of growth as erythroblasts shift from a highly proliferative state towards their terminal phase of differentiation. May be involved in apoptosis. The polypeptide is Caprin-2 (Homo sapiens (Human)).